A 331-amino-acid polypeptide reads, in one-letter code: Beta-ketoacyl-[acyl-carrier-protein] synthase III (331 aa).

Catalysis depends on residues cysteine 113 and histidine 253. The segment at 254–258 (QANTR) is ACP-binding. Residue asparagine 283 is part of the active site.

Belongs to the thiolase-like superfamily. FabH family. In terms of assembly, homodimer.

Its subcellular location is the cytoplasm. The catalysed reaction is malonyl-[ACP] + acetyl-CoA + H(+) = 3-oxobutanoyl-[ACP] + CO2 + CoA. It participates in lipid metabolism; fatty acid biosynthesis. Catalyzes the condensation reaction of fatty acid synthesis by the addition to an acyl acceptor of two carbons from malonyl-ACP. Catalyzes the first condensation reaction which initiates fatty acid synthesis and may therefore play a role in governing the total rate of fatty acid production. Possesses both acetoacetyl-ACP synthase and acetyl transacylase activities. Its substrate specificity determines the biosynthesis of branched-chain and/or straight-chain of fatty acids. The sequence is that of Beta-ketoacyl-[acyl-carrier-protein] synthase III from Desulfitobacterium hafniense (strain DSM 10664 / DCB-2).